The chain runs to 299 residues: Bifunctional protein FolD (299 aa).

Residues 168–170, serine 193, and isoleucine 234 contribute to the NADP(+) site; that span reads GRS.

The protein belongs to the tetrahydrofolate dehydrogenase/cyclohydrolase family. Homodimer.

It catalyses the reaction (6R)-5,10-methylene-5,6,7,8-tetrahydrofolate + NADP(+) = (6R)-5,10-methenyltetrahydrofolate + NADPH. It carries out the reaction (6R)-5,10-methenyltetrahydrofolate + H2O = (6R)-10-formyltetrahydrofolate + H(+). Its pathway is one-carbon metabolism; tetrahydrofolate interconversion. Functionally, catalyzes the oxidation of 5,10-methylenetetrahydrofolate to 5,10-methenyltetrahydrofolate and then the hydrolysis of 5,10-methenyltetrahydrofolate to 10-formyltetrahydrofolate. This is Bifunctional protein FolD from Rhizobium johnstonii (strain DSM 114642 / LMG 32736 / 3841) (Rhizobium leguminosarum bv. viciae).